A 249-amino-acid polypeptide reads, in one-letter code: Pyridoxine 5'-phosphate synthase (249 aa).

Asn-12 lines the 3-amino-2-oxopropyl phosphate pocket. 14 to 15 contacts 1-deoxy-D-xylulose 5-phosphate; it reads DH. Arg-23 is a binding site for 3-amino-2-oxopropyl phosphate. The Proton acceptor role is filled by His-48. 1-deoxy-D-xylulose 5-phosphate is bound by residues Arg-50 and His-55. Residue Glu-75 is the Proton acceptor of the active site. 1-deoxy-D-xylulose 5-phosphate is bound at residue Thr-105. The active-site Proton donor is His-199. 3-amino-2-oxopropyl phosphate contacts are provided by residues Gly-200 and 221-222; that span reads GH.

The protein belongs to the PNP synthase family. As to quaternary structure, homooctamer; tetramer of dimers.

The protein localises to the cytoplasm. It catalyses the reaction 3-amino-2-oxopropyl phosphate + 1-deoxy-D-xylulose 5-phosphate = pyridoxine 5'-phosphate + phosphate + 2 H2O + H(+). It functions in the pathway cofactor biosynthesis; pyridoxine 5'-phosphate biosynthesis; pyridoxine 5'-phosphate from D-erythrose 4-phosphate: step 5/5. Functionally, catalyzes the complicated ring closure reaction between the two acyclic compounds 1-deoxy-D-xylulose-5-phosphate (DXP) and 3-amino-2-oxopropyl phosphate (1-amino-acetone-3-phosphate or AAP) to form pyridoxine 5'-phosphate (PNP) and inorganic phosphate. The sequence is that of Pyridoxine 5'-phosphate synthase from Roseobacter denitrificans (strain ATCC 33942 / OCh 114) (Erythrobacter sp. (strain OCh 114)).